The sequence spans 482 residues: Exodeoxyribonuclease I (482 aa).

Residues 13-194 (LFYDYETFGI…TSDVYATIEL (182 aa)) enclose the Exonuclease domain. Positions 16, 18, and 187 each coordinate Mg(2+). Glutamate 18 contacts substrate. The 149-residue stretch at 203 to 351 (PKLFDFFFKY…LVKNVLLKKN (149 aa)) folds into the ExoI SH3-like domain. One can recognise an ExoI C-terminal domain in the interval 355 to 471 (NSLNVDLQIY…DLLKYVFKKY (117 aa)).

Monomer. Interacts with ssb (via C-terminus); this interaction stimulates the exonuclease activity by recruiting the enzyme to its substrate. Mg(2+) is required as a cofactor.

It carries out the reaction Exonucleolytic cleavage in the 3'- to 5'-direction to yield nucleoside 5'-phosphates.. Functionally, degrades single-stranded DNA (ssDNA) in a highly processive manner. Also functions as a DNA deoxyribophosphodiesterase that releases deoxyribose-phosphate moieties following the cleavage of DNA at an apurinic/apyrimidinic (AP) site by either an AP endonuclease or AP lyase. The chain is Exodeoxyribonuclease I (sbcB) from Buchnera aphidicola subsp. Schizaphis graminum (strain Sg).